We begin with the raw amino-acid sequence, 300 residues long: Regulatory protein NocR (300 aa).

The HTH lysR-type domain occupies 1–59; the sequence is MIQSRQLEAFRAVMLTGGMTSAANLVRITQPAISRLIRDLEEEIGISLFERTGNRLRPT. The segment at residues 19–38 is a DNA-binding region (H-T-H motif); it reads MTSAANLVRITQPAISRLIR.

Belongs to the LysR transcriptional regulatory family.

Its function is as follows. Positive regulatory protein for the noc operon involved in nopaline catabolism and uptake. This Agrobacterium fabrum (strain C58 / ATCC 33970) (Agrobacterium tumefaciens (strain C58)) protein is Regulatory protein NocR (nocR).